The primary structure comprises 590 residues: Transcription factor GTE7 (590 aa).

Residues 125–160 (LNNFTGEKNDLGPKKKKQKKNVSGLKRSNQFGPSDP) form a disordered region. The region spanning 164-270 (KLLAGMLNTC…DHFDGMFNPA (107 aa)) is the Bromo domain. Disordered regions lie at residues 282–400 (TGSS…KDPN) and 476–590 (RQGF…EAQC). The segment covering 288–298 (PEPDFKPDFKQ) has biased composition (basic and acidic residues). The span at 347–369 (PSPPPPPPVIQPELPQPQPPPPQ) shows a compositional bias: pro residues. The 82-residue stretch at 394–475 (PKAKDPNKRL…NYKKMASKIK (82 aa)) folds into the NET domain. Basic and acidic residues predominate over residues 498-508 (SAEKRTRRGDA). Residues 509 to 521 (GEEDVDIGEDIPI) are compositionally biased toward acidic residues. Positions 537–562 (AAAASSGSSSSGSSSSSGGSSSSSDS) are enriched in low complexity.

It localises to the nucleus. In Arabidopsis thaliana (Mouse-ear cress), this protein is Transcription factor GTE7 (GTE7).